Here is a 1083-residue protein sequence, read N- to C-terminus: Ubiquitin carboxyl-terminal hydrolase 1 (1083 aa).

A UBP-type zinc finger spans residues 30 to 165 (RSCVHFDKYV…KKDLLLEVVK (136 aa)). The Zn(2+) site is built by cysteine 32, histidine 34, cysteine 56, cysteine 59, cysteine 95, cysteine 98, cysteine 103, histidine 115, histidine 119, histidine 125, cysteine 139, and cysteine 142. Residues 202–1083 (RGLVNLGNTC…EAYILFYERI (882 aa)) enclose the USP domain. The active-site Nucleophile is cysteine 211. Disordered stretches follow at residues 387–424 (KDSE…DNET) and 450–486 (GSTE…ASGI). Basic and acidic residues-rich tracts occupy residues 409–419 (SDHKIQSRPET) and 455–473 (LMHD…EDVR). Residues 474 to 485 (ATQSNEETSASG) show a composition bias toward polar residues. The active-site Proton acceptor is histidine 1029.

The protein belongs to the peptidase C19 family.

The enzyme catalyses Thiol-dependent hydrolysis of ester, thioester, amide, peptide and isopeptide bonds formed by the C-terminal Gly of ubiquitin (a 76-residue protein attached to proteins as an intracellular targeting signal).. Its function is as follows. Recognizes and hydrolyzes the peptide bond at the C-terminal Gly of ubiquitin. Involved in the processing of poly-ubiquitin precursors as well as that of ubiquitinated proteins. Is involved in resistance to the arginine analog canavanine (CAN). In Arabidopsis thaliana (Mouse-ear cress), this protein is Ubiquitin carboxyl-terminal hydrolase 1 (UBP1).